Here is a 266-residue protein sequence, read N- to C-terminus: Indole-3-glycerol phosphate synthase (266 aa).

It belongs to the TrpC family.

It catalyses the reaction 1-(2-carboxyphenylamino)-1-deoxy-D-ribulose 5-phosphate + H(+) = (1S,2R)-1-C-(indol-3-yl)glycerol 3-phosphate + CO2 + H2O. Its pathway is amino-acid biosynthesis; L-tryptophan biosynthesis; L-tryptophan from chorismate: step 4/5. The chain is Indole-3-glycerol phosphate synthase from Herminiimonas arsenicoxydans.